The chain runs to 185 residues: Elongation factor P (185 aa).

It belongs to the elongation factor P family.

The protein localises to the cytoplasm. The protein operates within protein biosynthesis; polypeptide chain elongation. In terms of biological role, involved in peptide bond synthesis. Stimulates efficient translation and peptide-bond synthesis on native or reconstituted 70S ribosomes in vitro. Probably functions indirectly by altering the affinity of the ribosome for aminoacyl-tRNA, thus increasing their reactivity as acceptors for peptidyl transferase. In Limosilactobacillus reuteri (strain DSM 20016) (Lactobacillus reuteri), this protein is Elongation factor P.